Here is an 84-residue protein sequence, read N- to C-terminus: Putative antitoxin VapB37 (84 aa).

In terms of biological role, probable antitoxin component of a type II toxin-antitoxin (TA) system. Its putative cognate toxin is VapC37. This is Putative antitoxin VapB37 (vapB37) from Mycobacterium tuberculosis (strain CDC 1551 / Oshkosh).